The sequence spans 448 residues: Fumarate hydratase class II (448 aa).

Residues 83-85 (SGT), 113-116 (HPND), 123-125 (SSN), and T171 contribute to the substrate site. Residue H172 is the Proton donor/acceptor of the active site. S302 is an active-site residue. Substrate-binding positions include S303 and 308 to 310 (KVN).

It belongs to the class-II fumarase/aspartase family. Fumarase subfamily. As to quaternary structure, homotetramer.

The protein localises to the cytoplasm. The catalysed reaction is (S)-malate = fumarate + H2O. It participates in carbohydrate metabolism; tricarboxylic acid cycle; (S)-malate from fumarate: step 1/1. Its function is as follows. Involved in the TCA cycle. Catalyzes the stereospecific interconversion of fumarate to L-malate. This chain is Fumarate hydratase class II, found in Blochmanniella floridana.